Here is a 101-residue protein sequence, read N- to C-terminus: Apolipoprotein C-II (101 aa).

The first 22 residues, 1-22, serve as a signal peptide directing secretion; sequence MGARHLLALLLVLLVLGFEVQG. A lipid binding region spans residues 66–74; the sequence is TMDEKIRDM. The interval 78 to 101 is lipoprotein lipase cofactor; it reads STAAVSTYVGIFTDQLLSLLKGDE.

The protein belongs to the apolipoprotein C2 family. In terms of processing, proapolipoprotein C-II is synthesized as a sialic acid containing glycoprotein which is subsequently desialylated prior to its proteolytic processing. Proapolipoprotein C-II, the major form found in plasma undergoes proteolytic cleavage of its N-terminal hexapeptide to generate apolipoprotein C-II, which occurs as the minor form in plasma.

Its subcellular location is the secreted. Component of chylomicrons, very low-density lipoproteins (VLDL), low-density lipoproteins (LDL), and high-density lipoproteins (HDL) in plasma. Plays an important role in lipoprotein metabolism as an activator of lipoprotein lipase. Both proapolipoprotein C-II and apolipoprotein C-II can activate lipoprotein lipase. In Tapirus indicus (Asiatic tapir), this protein is Apolipoprotein C-II (APOC2).